Reading from the N-terminus, the 87-residue chain is HssA/B-like protein 7 (87 aa).

The segment covering Met-1–Ala-22 has biased composition (polar residues). Residues Met-1 to Asn-23 form a disordered region.

Belongs to the hssA/B family.

This Dictyostelium discoideum (Social amoeba) protein is HssA/B-like protein 7 (hssl7).